Reading from the N-terminus, the 506-residue chain is BTB/POZ domain-containing protein At3g22104 (506 aa).

Positions 6–76 (SDLEVDINGE…CYNDGRVAVM (71 aa)) constitute a BTB domain. An NPH3 domain is found at 187–435 (TWWFDEVLVL…LDEQQQQQQQ (249 aa)). Residues 421 to 492 (QAIETLDEQQ…MEVIKKRSKS (72 aa)) adopt a coiled-coil conformation. A disordered region spans residues 485–506 (VIKKRSKSSSKGSNRSLPKLCS).

Belongs to the NPH3 family.

It participates in protein modification; protein ubiquitination. Its function is as follows. May act as a substrate-specific adapter of an E3 ubiquitin-protein ligase complex (CUL3-RBX1-BTB) which mediates the ubiquitination and subsequent proteasomal degradation of target proteins. In Arabidopsis thaliana (Mouse-ear cress), this protein is BTB/POZ domain-containing protein At3g22104.